A 140-amino-acid polypeptide reads, in one-letter code: Sperm protein associated with the nucleus on the X chromosome N3 (140 aa).

Composition is skewed to polar residues over residues 1-20, 62-79, and 131-140; these read MEQP…CKSN, INSN…SINP, and EGSSQDSGED. A disordered region spans residues 1-140; sequence MEQPTSSTNG…EGSSQDSGED (140 aa).

This sequence belongs to the SPAN-X family.

The polypeptide is Sperm protein associated with the nucleus on the X chromosome N3 (SPANXN3) (Pan troglodytes (Chimpanzee)).